The primary structure comprises 178 residues: Acireductone dioxygenase (178 aa).

Residues 1 to 22 (MKAYWYDNKPGDQREPHDSGRP) are disordered. Positions 9–22 (KPGDQREPHDSGRP) are enriched in basic and acidic residues. 4 residues coordinate Fe(2+): His81, His83, Glu87, and His126. The Ni(2+) site is built by His81, His83, Glu87, and His126.

This sequence belongs to the acireductone dioxygenase (ARD) family. Requires Fe(2+) as cofactor. It depends on Ni(2+) as a cofactor.

Its subcellular location is the cytoplasm. The protein localises to the nucleus. It catalyses the reaction 1,2-dihydroxy-5-(methylsulfanyl)pent-1-en-3-one + O2 = 4-methylsulfanyl-2-oxobutanoate + formate + 2 H(+). The enzyme catalyses 1,2-dihydroxy-5-(methylsulfanyl)pent-1-en-3-one + O2 = 3-(methylsulfanyl)propanoate + CO + formate + 2 H(+). Its pathway is amino-acid biosynthesis; L-methionine biosynthesis via salvage pathway; L-methionine from S-methyl-5-thio-alpha-D-ribose 1-phosphate: step 5/6. In terms of biological role, catalyzes 2 different reactions between oxygen and the acireductone 1,2-dihydroxy-3-keto-5-methylthiopentene (DHK-MTPene) depending upon the metal bound in the active site. Fe-containing acireductone dioxygenase (Fe-ARD) produces formate and 2-keto-4-methylthiobutyrate (KMTB), the alpha-ketoacid precursor of methionine in the methionine recycle pathway. Ni-containing acireductone dioxygenase (Ni-ARD) produces methylthiopropionate, carbon monoxide and formate, and does not lie on the methionine recycle pathway. This Emericella nidulans (strain FGSC A4 / ATCC 38163 / CBS 112.46 / NRRL 194 / M139) (Aspergillus nidulans) protein is Acireductone dioxygenase (adi1).